The sequence spans 761 residues: Elongation factor G, mitochondrial (761 aa).

The transit peptide at 1-42 (MSVQKMMWVPRKMVGGRIPFFTCSKVFSGFSRRSFHESPLAR) directs the protein to the mitochondrion. Residues 68–349 (NKLRNIGISA…AIVDYLPNPS (282 aa)) enclose the tr-type G domain. GTP contacts are provided by residues 77-84 (AHIDSGKT), 148-152 (DTPGH), and 202-205 (NKMD).

It belongs to the TRAFAC class translation factor GTPase superfamily. Classic translation factor GTPase family. EF-G/EF-2 subfamily. The precursor is processed in two steps involving mitochondrial intermediate peptidase (MIP) and mitochondrial processing peptidase (MPP).

It is found in the mitochondrion. It functions in the pathway protein biosynthesis; polypeptide chain elongation. Its function is as follows. Mitochondrial GTPase that catalyzes the GTP-dependent ribosomal translocation step during translation elongation. During this step, the ribosome changes from the pre-translocational (PRE) to the post-translocational (POST) state as the newly formed A-site-bound peptidyl-tRNA and P-site-bound deacylated tRNA move to the P and E sites, respectively. Catalyzes the coordinated movement of the two tRNA molecules, the mRNA and conformational changes in the ribosome. In Saccharomyces cerevisiae (strain ATCC 204508 / S288c) (Baker's yeast), this protein is Elongation factor G, mitochondrial.